The following is a 333-amino-acid chain: Anthranilate phosphoribosyltransferase (333 aa).

5-phospho-alpha-D-ribose 1-diphosphate is bound by residues Gly81, 84–85, Thr89, 91–94, 109–117, and Ser121; these read GD, NIST, and KHGNRSVSS. Residue Gly81 participates in anthranilate binding. A Mg(2+)-binding site is contributed by Ser93. Residue Asn112 coordinates anthranilate. Arg167 contributes to the anthranilate binding site. Asp225 and Glu226 together coordinate Mg(2+).

The protein belongs to the anthranilate phosphoribosyltransferase family. As to quaternary structure, homodimer. Mg(2+) serves as cofactor.

The enzyme catalyses N-(5-phospho-beta-D-ribosyl)anthranilate + diphosphate = 5-phospho-alpha-D-ribose 1-diphosphate + anthranilate. The protein operates within amino-acid biosynthesis; L-tryptophan biosynthesis; L-tryptophan from chorismate: step 2/5. Its function is as follows. Catalyzes the transfer of the phosphoribosyl group of 5-phosphorylribose-1-pyrophosphate (PRPP) to anthranilate to yield N-(5'-phosphoribosyl)-anthranilate (PRA). In Glaesserella parasuis serovar 5 (strain SH0165) (Haemophilus parasuis), this protein is Anthranilate phosphoribosyltransferase.